Reading from the N-terminus, the 137-residue chain is UPF0146 protein MJ0688 (137 aa).

Belongs to the UPF0146 family.

In Methanocaldococcus jannaschii (strain ATCC 43067 / DSM 2661 / JAL-1 / JCM 10045 / NBRC 100440) (Methanococcus jannaschii), this protein is UPF0146 protein MJ0688.